The following is a 250-amino-acid chain: Functional amyloid subunit FapC (250 aa).

A signal peptide spans 1–24 (MKPTMALKPLVFALAALMAVAAQA). The stretch at 62–95 (NNAGANGSLSNSKGNLGANIAAGSGNQQDNAAAI) is one FapC_R1 repeat. A linker 1 region spans residues 96-126 (TSSAGDAATVFAVADIYQESKDNKFTNKGTQ). Residues 127 to 160 (NNALLNNSANNSSGNVGVNVAAGQGNQQKNNLAI) form a FapC_R2 repeat. The segment at 161-199 (VTADGKNVAAASNTEQVSLDNHFLNEASSKHSYKPQYVV) is linker 2. Residues 200–233 (NNAGLLNSANNASGNIGVNVAAGAGNQQSNTLTL) form a FapC_R3 repeat. Positions 237–240 (CTVC) match the Cys-X-X-Cys motif.

It belongs to the FapB/FapC family. In terms of assembly, the major component of purified amyloid fibrils. Forms fibrils in vitro; in the presence of FapA the fibrils are about 50% wider. Interacts with FapA. Fibrillates in vitro; this is inhibited by FapA. Fibrils are resistant to boiling in 2% (weight/vol) SDS and require &gt;90% (vol/vol) formic acid to dissolve.

It is found in the fimbrium. The protein resides in the secreted. Its function is as follows. The major functional amyloid subunit in this bacterium. Intrinsically disordered in its monomeric state. Upon overexpression of the endogenous six-gene locus (fapA-fapF) in situ, cells form large clumps during liquid growth, make large amounts of biofilm and produce amyloid fibrils. Expression of the 6 gene operon in E.coli strain BL21(DE3) induces flocculation and biofilm formation with copious extracellular fibrils. In Pseudomonas fluorescens, this protein is Functional amyloid subunit FapC.